Reading from the N-terminus, the 244-residue chain is 5-oxoprolinase subunit A (244 aa).

The protein belongs to the LamB/PxpA family. As to quaternary structure, forms a complex composed of PxpA, PxpB and PxpC.

It carries out the reaction 5-oxo-L-proline + ATP + 2 H2O = L-glutamate + ADP + phosphate + H(+). In terms of biological role, catalyzes the cleavage of 5-oxoproline to form L-glutamate coupled to the hydrolysis of ATP to ADP and inorganic phosphate. The polypeptide is 5-oxoprolinase subunit A (Escherichia coli O7:K1 (strain IAI39 / ExPEC)).